Consider the following 340-residue polypeptide: Protein-lysine N-methyltransferase EEF2KMT (340 aa).

At Met-1 the chain carries N-acetylmethionine. S-adenosyl-L-methionine is bound by residues Trp-139, 165–167, Trp-238, and Ala-257; that span reads GSG.

The protein belongs to the class I-like SAM-binding methyltransferase superfamily. EEF2KMT family. In terms of assembly, interacts with FAM86B2 and FAM86C1P.

It is found in the cytoplasm. The catalysed reaction is L-lysyl-[protein] + 3 S-adenosyl-L-methionine = N(6),N(6),N(6)-trimethyl-L-lysyl-[protein] + 3 S-adenosyl-L-homocysteine + 3 H(+). Catalyzes the trimethylation of eukaryotic elongation factor 2 (EEF2) on 'Lys-525'. The chain is Protein-lysine N-methyltransferase EEF2KMT (EEF2KMT) from Bos taurus (Bovine).